The sequence spans 376 residues: Alcohol dehydrogenase 1 (376 aa).

Ser2 bears the N-acetylserine mark. Zn(2+) is bound by residues Cys47, His68, Cys98, Cys101, Cys104, Cys112, and Cys176. NAD(+)-binding positions include 201–206 (GLGGVG), Asp225, Lys230, 294–296 (VGV), and Arg371.

The protein belongs to the zinc-containing alcohol dehydrogenase family. Class-I subfamily. Homodimer. It depends on Zn(2+) as a cofactor.

The protein localises to the cytoplasm. It carries out the reaction a primary alcohol + NAD(+) = an aldehyde + NADH + H(+). The catalysed reaction is a secondary alcohol + NAD(+) = a ketone + NADH + H(+). In Gallus gallus (Chicken), this protein is Alcohol dehydrogenase 1 (ADH1).